A 406-amino-acid chain; its full sequence is COP9 signalosome complex subunit 4 (406 aa).

The residue at position 2 (alanine 2) is an N-acetylalanine. N6-acetyllysine is present on lysine 25. The PCI domain maps to 197 to 366; that stretch reads YRRKFIEAAQ…GIVHFETREA (170 aa).

This sequence belongs to the CSN4 family. As to quaternary structure, component of the CSN complex, composed of COPS1/GPS1, COPS2, COPS3, COPS4, COPS5, COPS6, COPS7 (COPS7A or COPS7B), COPS8 and COPS9. In the complex, it probably interacts directly with COPS1, COPS2, COPS3, COPS5, COPS6, COPS7 (COPS7A or COPS7B) and COPS8. Interacts with TOR1A; the interaction is direct and associates TOR1A and SNAPIN with the CSN complex. Interacts with STON2; controls STON2 neddylation levels. Interacts with ERCC6.

The protein resides in the cytoplasm. It localises to the nucleus. Its subcellular location is the cytoplasmic vesicle. It is found in the secretory vesicle. The protein localises to the synaptic vesicle. Functionally, component of the COP9 signalosome complex (CSN), a complex involved in various cellular and developmental processes. The CSN complex is an essential regulator of the ubiquitin (Ubl) conjugation pathway by mediating the deneddylation of the cullin subunits of SCF-type E3 ligase complexes, leading to decrease the Ubl ligase activity of SCF-type complexes such as SCF, CSA or DDB2. Also involved in the deneddylation of non-cullin subunits such as STON2. The complex is also involved in phosphorylation of p53/TP53, c-jun/JUN, IkappaBalpha/NFKBIA, ITPK1, IRF8/ICSBP and SNAPIN, possibly via its association with CK2 and PKD kinases. CSN-dependent phosphorylation of TP53 and JUN promotes and protects degradation by the Ubl system, respectively. In Pongo abelii (Sumatran orangutan), this protein is COP9 signalosome complex subunit 4 (COPS4).